Reading from the N-terminus, the 1487-residue chain is Collagen alpha-1(II) chain (1487 aa).

The signal sequence occupies residues 1-25; sequence MIRLGAPQTLVLLTLLVAAVLRCQG. Residues 26–181 constitute a propeptide, N-terminal propeptide; that stretch reads QDVQEAGSCV…PPGLGGNFAA (156 aa). One can recognise a VWFC domain in the interval 32–90; sequence GSCVQDGQRYNDKDVWKPEPCRICVCDTGTVLCDDIICEDVKDCLSPEIPFGECCPICP. Positions 97 to 1237 are disordered; sequence SGQPGPKGQK…PREKGPDPLQ (1141 aa). Basic and acidic residues-rich tracts occupy residues 105–116 and 133–154; these read QKGEPGDIKDIV and PRGDRGDKGEKGAPGPRGRDGE. Positions 158 to 173 are enriched in pro residues; sequence PGNPGPPGPPGPPGPP. K190 is modified (5-hydroxylysine). The O-linked (Gal...) hydroxylysine glycan is linked to K190. Residues 201-1214 are triple-helical region; sequence GPMGPMGPRG…PGPPGPPGPP (1014 aa). Positions 208–217 are enriched in pro residues; sequence PRGPPGPAGA. Residues 218-239 are compositionally biased toward low complexity; that stretch reads PGPQGFQGNPGEPGEPGVSGPM. Pro residues predominate over residues 241-250; it reads PRGPPGPPGK. Residues 251-265 show a composition bias toward basic and acidic residues; the sequence is PGDDGEAGKPGKAGE. A 5-hydroxylysine mark is found at K287, K299, and K308. 3 O-linked (Gal...) hydroxylysine glycosylation sites follow: K287, K299, and K308. 2 stretches are compositionally biased toward low complexity: residues 310 to 320 and 335 to 350; these read ESGSPGENGSP and TGPAGAAGARGNDGQP. A compositionally biased stretch (gly residues) spans 360–369; sequence GPAGGPGFPG. Composition is skewed to low complexity over residues 370 to 382 and 391 to 431; these read APGAKGEAGPTGA and PRGE…AGAP. K374 carries the post-translational modification 5-hydroxylysine. A glycan (O-linked (Gal...) hydroxylysine) is linked at K374. Residues 433 to 442 show a composition bias toward pro residues; that stretch reads FPGPRGPPGP. Residues K608 and K620 each carry the 5-hydroxylysine modification. O-linked (Gal...) hydroxylysine glycosylation is found at K608 and K620. Low complexity-rich tracts occupy residues 622–631 and 656–667; these read LPGAPGLRGL and QGAPGPSGFQGL. 2 positions are modified to 4-hydroxyproline: P659 and P668. P670 carries the post-translational modification 3-hydroxyproline. Residues P671 and P674 each carry the 4-hydroxyproline modification. The segment covering 764–775 has biased composition (basic and acidic residues); sequence KGDRGDVGEKGP. Composition is skewed to low complexity over residues 833 to 848 and 877 to 913; these read AGFAGPPGADGQPGAK and PTGVTGPKGARGAQGPPGATGFPGAAGRVGPPGSNGN. P907 is modified (3-hydroxyproline). P908, P914, and P920 each carry 4-hydroxyproline. Residues 1069–1079 show a composition bias toward pro residues; it reads APGPPGSPGPA. Residues 1115–1129 show a composition bias toward basic and acidic residues; the sequence is RGDKGEAGEPGERGL. K1130 is subject to 5-hydroxylysine. An O-linked (Gal...) hydroxylysine glycan is attached at K1130. 3-hydroxyproline is present on P1144. Residues 1148-1157 show a composition bias toward low complexity; it reads SGDQGASGPA. P1181 bears the 4-hydroxyproline mark. Position 1186 is a 3-hydroxyproline (P1186). A 4-hydroxyproline modification is found at P1187. Positions 1199–1216 are enriched in pro residues; that stretch reads AGPPGNPGPPGPPGPPGP. P1201 is modified (3-hydroxyproline). Residues P1202 and P1205 each carry the 4-hydroxyproline modification. P1207 carries the post-translational modification 3-hydroxyproline. P1208 and P1211 each carry 4-hydroxyproline. P1213 bears the 3-hydroxyproline mark. P1214 is modified (4-hydroxyproline). Residues 1215–1241 are nonhelical region (C-terminal); sequence GPGIDMSAFAGLGPREKGPDPLQYMRA. The region spanning 1253-1487 is the Fibrillar collagen NC1 domain; it reads AEVDATLKSL…GVDIGPVCFL (235 aa). 3 cysteine pairs are disulfide-bonded: C1283-C1315, C1323-C1485, and C1393-C1438. Ca(2+) is bound by residues D1301, N1303, Q1304, C1306, and D1309. An N-linked (GlcNAc...) asparagine glycan is attached at N1388.

The protein belongs to the fibrillar collagen family. Homotrimers of alpha 1(II) chains. The N-telopeptide is covalently linked to the helical COL2 region of alpha 1(IX), alpha 2(IX) and alpha 3(IX) chain. The C-telopeptide is covalently linked to an another site in the helical region of alpha 3(IX) COL2. Post-translationally, contains mostly 4-hydroxyproline. Prolines at the third position of the tripeptide repeating unit (G-X-P) are 4-hydroxylated in some or all of the chains. In terms of processing, contains 3-hydroxyproline at a few sites. This modification occurs on the first proline residue in the sequence motif Gly-Pro-Hyp, where Hyp is 4-hydroxyproline. Lysine residues at the third position of the tripeptide repeating unit (G-X-Y) are 5-hydroxylated in some or all of the chains. Post-translationally, O-glycosylated on hydroxylated lysine residues. The O-linked glycan consists of a Glc-Gal disaccharide. Isoform 2 is highly expressed in juvenile chondrocyte and low in fetal chondrocyte.

It is found in the secreted. The protein localises to the extracellular space. Its subcellular location is the extracellular matrix. Functionally, type II collagen is specific for cartilaginous tissues. It is essential for the normal embryonic development of the skeleton, for linear growth and for the ability of cartilage to resist compressive forces. In Homo sapiens (Human), this protein is Collagen alpha-1(II) chain.